We begin with the raw amino-acid sequence, 615 residues long: UvrABC system protein C (615 aa).

Residues 14–91 form the GIY-YIG domain; it reads TSPGCYIHKD…IKENKPKYNI (78 aa). Residues 196-231 enclose the UVR domain; the sequence is NKIIDELKGKMAAAAQTMEFERAAEYRDLIQAIGTL.

The protein belongs to the UvrC family. Interacts with UvrB in an incision complex.

The protein localises to the cytoplasm. Functionally, the UvrABC repair system catalyzes the recognition and processing of DNA lesions. UvrC both incises the 5' and 3' sides of the lesion. The N-terminal half is responsible for the 3' incision and the C-terminal half is responsible for the 5' incision. This Streptococcus pneumoniae (strain ATCC 700669 / Spain 23F-1) protein is UvrABC system protein C.